A 77-amino-acid polypeptide reads, in one-letter code: Sec-independent protein translocase protein TatA 2 (77 aa).

The helical transmembrane segment at Phe2–Phe22 threads the bilayer. The interval Lys52–Ala77 is disordered.

The protein belongs to the TatA/E family. In terms of assembly, forms a complex with TatC.

Its subcellular location is the cell inner membrane. Its function is as follows. Part of the twin-arginine translocation (Tat) system that transports large folded proteins containing a characteristic twin-arginine motif in their signal peptide across membranes. TatA could form the protein-conducting channel of the Tat system. The chain is Sec-independent protein translocase protein TatA 2 from Aquifex aeolicus (strain VF5).